The following is a 372-amino-acid chain: MSMSPKHTTPFSVSDILSPLEESYKKVGMEGGGLGAPLAAYRQGQAAPPAAAMQQHAVGHHGAVTAAYHMTAAGVPQLSHSAVGGYCNGNLGNMSELPPYQDTMRNSASGPGWYGANPDPRFPAISRFMGPASGMNMSGMGGLGSLGDVSKNMAPLPSAPRRKRRVLFSQAQVYELERRFKQQKYLSAPEREHLASMIHLTPTQVKIWFQNHRYKMKRQAKDKAAQQQLQQDSGGGGGGGGGAGCPQQQQAQQQSPRRVAVPVLVKDGKPCQAGAPAPGAASLQSHAQQQAQQQAQAAQAAAAAISVGSGGAGLGAHPGHQPGSAGQSPDLAHHAASPAGLQGQVSSLSHLNSSGSDYGAMSCSTLLYGRTW.

Positions 161–220 (RRKRRVLFSQAQVYELERRFKQQKYLSAPEREHLASMIHLTPTQVKIWFQNHRYKMKRQA) form a DNA-binding region, homeobox. Disordered regions lie at residues 219 to 258 (QAKD…SPRR), 269 to 288 (KPCQ…SHAQ), and 312 to 340 (AGLG…SPAG). Residues 233-244 (SGGGGGGGGGAG) show a composition bias toward gly residues. A compositionally biased stretch (low complexity) spans 245–254 (CPQQQQAQQQ). S255 bears the Phosphoserine mark. Low complexity predominate over residues 273 to 288 (AGAPAPGAASLQSHAQ).

It belongs to the NK-2 homeobox family. As to quaternary structure, interacts with WWTR1. In terms of processing, phosphorylated on serine residues by STK3/MST2. As to expression, thyroid, lung and brain.

Its subcellular location is the nucleus. In terms of biological role, transcription factor that binds and activates the promoter of thyroid specific genes such as thyroglobulin, thyroperoxidase, and thyrotropin receptor. Crucial in the maintenance of the thyroid differentiation phenotype. May play a role in lung development and surfactant homeostasis. Forms a regulatory loop with GRHL2 that coordinates lung epithelial cell morphogenesis and differentiation. Activates the transcription of GNRHR and plays a role in enhancing the circadian oscillation of its gene expression. Represses the transcription of the circadian transcriptional repressor NR1D1. The sequence is that of Homeobox protein Nkx-2.1 from Mus musculus (Mouse).